Consider the following 313-residue polypeptide: Putative S-adenosyl-L-methionine-dependent methyltransferase MUL_0706 (313 aa).

Residues Asp132 and 161–162 each bind S-adenosyl-L-methionine; that span reads DL.

It belongs to the UPF0677 family.

Its function is as follows. Exhibits S-adenosyl-L-methionine-dependent methyltransferase activity. This Mycobacterium ulcerans (strain Agy99) protein is Putative S-adenosyl-L-methionine-dependent methyltransferase MUL_0706.